The sequence spans 344 residues: Phenylalanine--tRNA ligase alpha subunit (344 aa).

Glu257 is a Mg(2+) binding site.

This sequence belongs to the class-II aminoacyl-tRNA synthetase family. Phe-tRNA synthetase alpha subunit type 1 subfamily. As to quaternary structure, tetramer of two alpha and two beta subunits. Mg(2+) is required as a cofactor.

It is found in the cytoplasm. It carries out the reaction tRNA(Phe) + L-phenylalanine + ATP = L-phenylalanyl-tRNA(Phe) + AMP + diphosphate + H(+). The protein is Phenylalanine--tRNA ligase alpha subunit of Chlorobium chlorochromatii (strain CaD3).